Consider the following 394-residue polypeptide: Chorismate synthase (394 aa).

NADP(+)-binding residues include arginine 40 and arginine 46. FMN-binding positions include 135–137 (RAS), 255–256 (QA), glycine 302, 317–321 (KPISS), and arginine 343.

The protein belongs to the chorismate synthase family. In terms of assembly, homotetramer. It depends on FMNH2 as a cofactor.

It carries out the reaction 5-O-(1-carboxyvinyl)-3-phosphoshikimate = chorismate + phosphate. It functions in the pathway metabolic intermediate biosynthesis; chorismate biosynthesis; chorismate from D-erythrose 4-phosphate and phosphoenolpyruvate: step 7/7. Catalyzes the anti-1,4-elimination of the C-3 phosphate and the C-6 proR hydrogen from 5-enolpyruvylshikimate-3-phosphate (EPSP) to yield chorismate, which is the branch point compound that serves as the starting substrate for the three terminal pathways of aromatic amino acid biosynthesis. This reaction introduces a second double bond into the aromatic ring system. This is Chorismate synthase from Frankia alni (strain DSM 45986 / CECT 9034 / ACN14a).